A 1984-amino-acid chain; its full sequence is Spermatogenesis-associated protein 31H1 (1984 aa).

Disordered regions lie at residues 448-467, 1045-1067, 1181-1287, 1326-1346, and 1439-1984; these read MGLTKSKNQSMKSPGTTPGP, PMEESEDSQSDSQTRISESQHSL, YRER…SDSK, RIGATQTSTASLKRQPKKPSQ, and QQPR…EATR. Composition is skewed to polar residues over residues 450–463, 1058–1067, and 1205–1226; these read LTKSKNQSMKSPGT, TRISESQHSL, and TQASKSPTSTIDLQSGPSQSPA. Positions 1238 to 1247 are enriched in basic and acidic residues; sequence SRPDLVEKTK. 2 stretches are compositionally biased toward polar residues: residues 1458-1471 and 1492-1508; these read TDSQSGIAFQTASV and RNETSSQESKNLSTPGT. Basic and acidic residues-rich tracts occupy residues 1532–1558 and 1568–1579; these read DKLTHKEHNHPSFYRERTPRGPSERTR and SPSERSQRSSLE. Repeat copies occupy residues 1593–1600, 1601–1608, and 1609–1616. The 27 X 8 AA approximate tandem repeat of P-S-E-R-S-H-H-S stretch occupies residues 1593-1935; the sequence is PSRKNHSSPS…CSPSERSRRS (343 aa). A compositionally biased stretch (low complexity) spans 1599–1610; the sequence is SSPSERSWRSPS. Basic and acidic residues predominate over residues 1620–1630; sequence RSCHSLSERGL. A compositionally biased stretch (basic residues) spans 1636–1647; it reads RSHRGPSQRRHH. A run of 3 repeats spans residues 1641 to 1648, 1649 to 1656, and 1657 to 1664. Basic and acidic residues predominate over residues 1648–1667; it reads SPSERSHRSPSERSHRSSSE. Over residues 1668-1679 the composition is skewed to basic residues; sequence RRHRSPSQRSHR. Residues 1680–1691 show a composition bias toward basic and acidic residues; sequence GPSERSHCSPSE. Tandem repeats lie at residues 1681–1688, 1689–1696, 1697–1704, 1705–1712, 1713–1720, 1721–1728, 1729–1736, 1737–1744, 1745–1752, 1753–1760, 1761–1768, 1769–1776, 1777–1784, 1785–1792, 1793–1800, 1801–1808, 1848–1855, 1864–1871, and 1880–1887. Residues 1692–1727 show a composition bias toward basic residues; that stretch reads RRHRSPSQRSHRGPSERRHHSPSKRSHRSPARRSHR. Residues 1728–1869 are compositionally biased toward basic and acidic residues; the sequence is SPSERSHHSP…SRCSPSERRG (142 aa). 3 stretches are compositionally biased toward basic and acidic residues: residues 1895 to 1917, 1928 to 1941, and 1949 to 1959; these read RTSERSHRSSCERTRHSPSEMRP, PSERSRRSPLKEGL, and RPSHSLSRDFK. 2 tandem repeats follow at residues 1921–1928 and 1929–1935. Residues 1960 to 1969 show a composition bias toward polar residues; sequence NQTTLLGTTH.

In terms of tissue distribution, expressed in sperm (at protein level).

The polypeptide is Spermatogenesis-associated protein 31H1 (Homo sapiens (Human)).